Consider the following 77-residue polypeptide: Large ribosomal subunit protein bL28 (77 aa).

Belongs to the bacterial ribosomal protein bL28 family.

This chain is Large ribosomal subunit protein bL28, found in Delftia acidovorans (strain DSM 14801 / SPH-1).